We begin with the raw amino-acid sequence, 168 residues long: Large ribosomal subunit protein uL10 (168 aa).

This sequence belongs to the universal ribosomal protein uL10 family. Part of the ribosomal stalk of the 50S ribosomal subunit. The N-terminus interacts with L11 and the large rRNA to form the base of the stalk. The C-terminus forms an elongated spine to which L12 dimers bind in a sequential fashion forming a multimeric L10(L12)X complex.

Functionally, forms part of the ribosomal stalk, playing a central role in the interaction of the ribosome with GTP-bound translation factors. The polypeptide is Large ribosomal subunit protein uL10 (Paracidovorax citrulli (strain AAC00-1) (Acidovorax citrulli)).